The sequence spans 218 residues: Probable transaldolase (218 aa).

Residue lysine 87 is the Schiff-base intermediate with substrate of the active site.

This sequence belongs to the transaldolase family. Type 3B subfamily.

It is found in the cytoplasm. It catalyses the reaction D-sedoheptulose 7-phosphate + D-glyceraldehyde 3-phosphate = D-erythrose 4-phosphate + beta-D-fructose 6-phosphate. The protein operates within carbohydrate degradation; pentose phosphate pathway; D-glyceraldehyde 3-phosphate and beta-D-fructose 6-phosphate from D-ribose 5-phosphate and D-xylulose 5-phosphate (non-oxidative stage): step 2/3. In terms of biological role, transaldolase is important for the balance of metabolites in the pentose-phosphate pathway. The polypeptide is Probable transaldolase (Cytophaga hutchinsonii (strain ATCC 33406 / DSM 1761 / CIP 103989 / NBRC 15051 / NCIMB 9469 / D465)).